A 190-amino-acid chain; its full sequence is Threonylcarbamoyl-AMP synthase (190 aa).

In terms of domain architecture, YrdC-like spans 7 to 190 (GDAIAAAIDV…ALTGELFRQG (184 aa)).

The protein belongs to the SUA5 family. TsaC subfamily.

Its subcellular location is the cytoplasm. The catalysed reaction is L-threonine + hydrogencarbonate + ATP = L-threonylcarbamoyladenylate + diphosphate + H2O. In terms of biological role, required for the formation of a threonylcarbamoyl group on adenosine at position 37 (t(6)A37) in tRNAs that read codons beginning with adenine. Catalyzes the conversion of L-threonine, HCO(3)(-)/CO(2) and ATP to give threonylcarbamoyl-AMP (TC-AMP) as the acyladenylate intermediate, with the release of diphosphate. The sequence is that of Threonylcarbamoyl-AMP synthase from Shigella boydii serotype 4 (strain Sb227).